Consider the following 1406-residue polypeptide: MPTLGLLFASIGIAVLAMGVPHCRGYTIKEDESFLQQPHYASQEQLEDLFAGLEKAYPNQAKVHFLGRSLEGRNLLALQISRNTRSRNLLTPPVKYIANMHGDETVGRQLLVYMAQYLLGNHERISDLGQLVNSTDIYLVPTMNPDGYALSQEGNCESLPNYVGRGNAANIDLNRDFPDRLEQSHVHQLRAQSRQPETAALVNWIVSKPFVLSANFHGGAVVASYPYDNSLAHNECCEESLTPDDRVFKQLAHTYSDNHPIMRKGNNCNDSFSGGITNGAHWYELSGGMQDFNYAFSNCFELTIELSCCKYPAASTLPQEWQRNKASLLQLLRQAHIGIKGLVTDASGFPIADANVYVAGLEEKPMRTSKRGEYWRLLTPGLYSVHASAFGYQTSAPQQVRVTNDNQEALRLDFKLAPVETNFDGNFRKVKVERSEPPQKLKKQFNGFLTPTKYEHHNFTAMESYLRAISSSYPSLTRLYSIGKSVQGRDLWVLEIFATPGSHVPGVPEFKYVANMHGNEVVGKELLLILTKYMLERYGNDDRITKLVNGTRMHFLYSMNPDGYEISIEGDRTGGVGRANAHGIDLNRNFPDQYGTDRFNKVTEPEVAAVMNWTLSLPFVLSANLHGGSLVANYPFDDNENDFNDPFMRLRNSSINGRKPNPTEDNALFKHLAGIYSNAHPTMYLGQPCELFQNEFFPDGITNGAQWYSVTGGMQDWNYVRAGCLELTIEMGCDKFPKAAELSRYWEDHREPLLQFIEQVHCGIHGFVHSTIGTPIAGAVVRLDGANHSTYSQVFGDYWKLALPGRHNLTVLGDNYAPLRMEVEVPDVHPFEMRMDITLMPDDPQHWASANDFRIIENVVNTRYHTNPQVRARLAELENQNGQIASFGYADSEFGTIFNYLKMTSDIGEPEEHKYKLLVVSSLYDTTAPLGREILLNLIRHLVEGFKLQDTSVVELLKRSVIYFLPQTSKFQNVFDMYNSNTSICDPVLGDELAERILGPETDQAKDVFLQFLRSERFDLMLTFGAGNSDLNYPKGDSVLVKFAHRMQRTEFNYSPLQCPPSATRQLHRETTERLTNMMYRIYNLPVYTLGISCCRMPHQKKIASVWRKNIDKIKNFLALVKTGVSGLVQNDKGQPLREAYVRLLEHDRIINVTKNVARFQLMLPHGLYGLEVTAPNYESQMIKVDVEDGRVTELGIIRMHPFTLIRGVVLELPNNDNRATTSIAGVVLDESNHPVRNAKVSVVGQTQLRNFTGSMGQYRISAVPLGTITLKVEAPRHLEATRQMHLIQGGLATENVVFHLKVNEHVFGLPRFLFILCASVLIIVGVIVCVLCAQFWFYRRHRGDKPYYNFSLLPQRGKEQFGLEDDDGGDDGETELFRSPIKRELSQRAHLVNNQTNYSFIIQAA.

Positions 1–25 (MPTLGLLFASIGIAVLAMGVPHCRG) are cleaved as a signal peptide. Residues 26-1312 (YTIKEDESFL…VNEHVFGLPR (1287 aa)) are Extracellular-facing. 2 consecutive Peptidase M14 domains span residues 39-335 (HYAS…LRQA) and 455-760 (EHHN…IEQV). The Zn(2+) site is built by histidine 101 and glutamate 104. A glycan (N-linked (GlcNAc...) asparagine) is linked at asparagine 133. Cystine bridges form between cysteine 156-cysteine 309, cysteine 236-cysteine 237, and cysteine 268-cysteine 308. Histidine 217 is a Zn(2+) binding site. A glycan (N-linked (GlcNAc...) asparagine) is linked at asparagine 269. Glutamate 305 acts as the Proton donor/acceptor in catalysis. An N-linked (GlcNAc...) asparagine glycan is attached at asparagine 458. The Zn(2+) site is built by histidine 517 and glutamate 520. N-linked (GlcNAc...) asparagine glycans are attached at residues asparagine 549 and asparagine 612. A Zn(2+)-binding site is contributed by histidine 626. Asparagine 652 carries an N-linked (GlcNAc...) asparagine glycan. Catalysis depends on glutamate 730, which acts as the Proton donor/acceptor. Residues asparagine 787, asparagine 808, asparagine 981, asparagine 1152, and asparagine 1251 are each glycosylated (N-linked (GlcNAc...) asparagine). Positions 863–1121 (RYHTNPQVRA…DKIKNFLALV (259 aa)) constitute a Peptidase M14 3 domain. A helical membrane pass occupies residues 1313–1333 (FLFILCASVLIIVGVIVCVLC). The Cytoplasmic segment spans residues 1334-1406 (AQFWFYRRHR…TNYSFIIQAA (73 aa)). Residues 1343 to 1345 (RGD) carry the Cell attachment site motif. Position 1380 is a phosphoserine (serine 1380).

Belongs to the peptidase M14 family. Monomer. Zn(2+) serves as cofactor. Expressed in the central nervous system (CNS) of adults and larvae. In the adult brain, increased levels of expression in the mushroom body (MB) and neurosecretory cells.

Its subcellular location is the membrane. The protein resides in the cytoplasm. It localises to the perinuclear region. It is found in the golgi apparatus. The protein localises to the trans-Golgi network. Its subcellular location is the secreted. The catalysed reaction is Releases C-terminal Arg and Lys from polypeptides.. Its activity is regulated as follows. Inhibited by 2-guanidinoethylmercaptosuccinic acid (GEMSA). Functionally, metallocarboxypeptidase that catalyzes the release of C-terminal arginine or lysine residues from peptides and proteins. Functionally important for processing a broad range of proteins including growth factors, peptide hormones (such as Akh) and neuropeptides. Consequently, it is involved in a wide range of processes including viability, memory formation, locomotive activity, wing formation, and peptide-regulated behaviors such as starvation-induced hyperactivity, appetitive gustatory preference, and cold and ethanol sensitivity. Key enzyme in neuropeptide processing. Involved in regulation of memory formation, possibly via the insulin pathway in neurosecretory cells. This is Carboxypeptidase D from Drosophila melanogaster (Fruit fly).